Reading from the N-terminus, the 302-residue chain is tRNA-cytidine(32) 2-sulfurtransferase (302 aa).

The PP-loop motif motif lies at 45 to 50 (SGGKDS). Positions 120, 123, and 211 each coordinate [4Fe-4S] cluster.

Belongs to the TtcA family. In terms of assembly, homodimer. Requires Mg(2+) as cofactor. [4Fe-4S] cluster serves as cofactor.

Its subcellular location is the cytoplasm. The catalysed reaction is cytidine(32) in tRNA + S-sulfanyl-L-cysteinyl-[cysteine desulfurase] + AH2 + ATP = 2-thiocytidine(32) in tRNA + L-cysteinyl-[cysteine desulfurase] + A + AMP + diphosphate + H(+). The protein operates within tRNA modification. Its function is as follows. Catalyzes the ATP-dependent 2-thiolation of cytidine in position 32 of tRNA, to form 2-thiocytidine (s(2)C32). The sulfur atoms are provided by the cysteine/cysteine desulfurase (IscS) system. The sequence is that of tRNA-cytidine(32) 2-sulfurtransferase from Aeromonas hydrophila subsp. hydrophila (strain ATCC 7966 / DSM 30187 / BCRC 13018 / CCUG 14551 / JCM 1027 / KCTC 2358 / NCIMB 9240 / NCTC 8049).